We begin with the raw amino-acid sequence, 232 residues long: Small ribosomal subunit protein uS3 (232 aa).

In terms of domain architecture, KH type-2 spans 39–107 (VRQYLTKALK…PAQINIAEVR (69 aa)).

It belongs to the universal ribosomal protein uS3 family. As to quaternary structure, part of the 30S ribosomal subunit. Forms a tight complex with proteins S10 and S14.

In terms of biological role, binds the lower part of the 30S subunit head. Binds mRNA in the 70S ribosome, positioning it for translation. The polypeptide is Small ribosomal subunit protein uS3 (Pseudoalteromonas atlantica (strain T6c / ATCC BAA-1087)).